Consider the following 447-residue polypeptide: Argininosuccinate synthase (447 aa).

Residues 17 to 25 and A43 contribute to the ATP site; that span reads AFSGGLDTS. Residue Y99 coordinates L-citrulline. Positions 129 and 131 each coordinate ATP. L-aspartate contacts are provided by T131, N135, and D136. N135 is a binding site for L-citrulline. D136 is a binding site for ATP. Residues R139 and S192 each coordinate L-citrulline. An ATP-binding site is contributed by D194. L-citrulline is bound by residues T201, E203, and E280.

It belongs to the argininosuccinate synthase family. Type 2 subfamily. Homotetramer.

It localises to the cytoplasm. It catalyses the reaction L-citrulline + L-aspartate + ATP = 2-(N(omega)-L-arginino)succinate + AMP + diphosphate + H(+). The protein operates within amino-acid biosynthesis; L-arginine biosynthesis; L-arginine from L-ornithine and carbamoyl phosphate: step 2/3. The polypeptide is Argininosuccinate synthase (Shigella boydii serotype 18 (strain CDC 3083-94 / BS512)).